The primary structure comprises 96 residues: MAKINEEQVRHVAHLARLAVTDEEVQQFTVQLEKILGFAEQLNELDTTGIEPTTHVLDLKNVLRKDEVRPSLPRTEVERLAPDWEDGQVRVPAVFE.

Belongs to the GatC family. Heterotrimer of A, B and C subunits.

The enzyme catalyses L-glutamyl-tRNA(Gln) + L-glutamine + ATP + H2O = L-glutaminyl-tRNA(Gln) + L-glutamate + ADP + phosphate + H(+). It carries out the reaction L-aspartyl-tRNA(Asn) + L-glutamine + ATP + H2O = L-asparaginyl-tRNA(Asn) + L-glutamate + ADP + phosphate + 2 H(+). Functionally, allows the formation of correctly charged Asn-tRNA(Asn) or Gln-tRNA(Gln) through the transamidation of misacylated Asp-tRNA(Asn) or Glu-tRNA(Gln) in organisms which lack either or both of asparaginyl-tRNA or glutaminyl-tRNA synthetases. The reaction takes place in the presence of glutamine and ATP through an activated phospho-Asp-tRNA(Asn) or phospho-Glu-tRNA(Gln). This chain is Aspartyl/glutamyl-tRNA(Asn/Gln) amidotransferase subunit C, found in Exiguobacterium sibiricum (strain DSM 17290 / CCUG 55495 / CIP 109462 / JCM 13490 / 255-15).